A 260-amino-acid polypeptide reads, in one-letter code: Cytosolic Fe-S cluster assembly factor Nubp2 homolog (260 aa).

Position 14 to 21 (14 to 21 (GKGGVGKS)) interacts with ATP. Residues Cys188 and Cys191 each contribute to the [4Fe-4S] cluster site.

This sequence belongs to the Mrp/NBP35 ATP-binding proteins family. NUBP2/CFD1 subfamily. As to quaternary structure, heterotetramer of 2 Nubp1 and 2 Nubp2 chains. [4Fe-4S] cluster is required as a cofactor.

It is found in the cytoplasm. Its function is as follows. Component of the cytosolic iron-sulfur (Fe/S) protein assembly (CIA) machinery. Required for maturation of extramitochondrial Fe-S proteins. The Nubp1-Nubp2 heterotetramer forms a Fe-S scaffold complex, mediating the de novo assembly of an Fe-S cluster and its transfer to target apoproteins. In Drosophila sechellia (Fruit fly), this protein is Cytosolic Fe-S cluster assembly factor Nubp2 homolog.